Consider the following 428-residue polypeptide: MDTERGSISSSEISRTAHLQDRTVACLPPSYGQLVTILSIDGGGIRGIIPGTILAYLESQLQELDGEEARLVDYFDVISGTSTGGLIVAMLTAQDQSGGHSRNSNRPLFEAKEIVPFYLKHSPKIFPQPRGIFCGWGETIVRLVGGPKFNGKYLHDLVEGFLGDTKLTQSLTNVVIPCFDIKKLQPVIFSSYQAVNNQAMNAKLSDICISTSAAPTFFPAHRFTNEDSEGIKHEFNLIDGGIAANNPTLCAIAEVTKQIIKKNPVMGDISPLDFTRFLVISIGTGSIRNQEKYNAKMASKWGLMCWVFESGSTPILDCYSEAIHDMVDYQSSVVFQALRSEKNYLRIDDDSLKGDLGSVDISTEKNMEGLVEVGEALLKKRVSRVNLESGHYQPISENVTNEEALKRFAKVLSEERKLRESRSPKLKI.

Residues leucine 38–isoleucine 252 form the PNPLA domain. The short motif at glycine 42 to glycine 47 is the GXGXXG element. Positions glycine 80–glycine 84 match the GXSXG motif. The Nucleophile role is filled by serine 82. The active-site Proton acceptor is aspartate 239. Residues aspartate 239–glycine 241 carry the DGA/G motif. Residue serine 423 is modified to Phosphoserine.

It belongs to the patatin family. In terms of tissue distribution, expressed specifically in the stigma, ovary and funiculus of the ovary.

Its subcellular location is the cytoplasm. Functionally, possesses non-specific lipolytic acyl hydrolase (LAH) activity. Catalyzes the hydrolysis of the neutral lipids monogalactosyldiacylglycerol (MGDG), digalactosyldiacylglycerol (DGDG) and phosphatidylglycerol (PG), and less efficiently the polar lipids phosphatidylcholine (PC) and phosphatidylinositol (PI), but not the storage lipid triacylglycerol (TAG). May play a role in root development. The protein is Patatin-like protein 3 (PLP3) of Arabidopsis thaliana (Mouse-ear cress).